The sequence spans 131 residues: Large ribosomal subunit protein bL17 (131 aa).

The protein belongs to the bacterial ribosomal protein bL17 family. Part of the 50S ribosomal subunit. Contacts protein L32.

In Teredinibacter turnerae (strain ATCC 39867 / T7901), this protein is Large ribosomal subunit protein bL17.